Consider the following 1456-residue polypeptide: RNA replication protein (1456 aa).

Residues 59 to 224 (NPYSIELHTH…HHEFTDLQWL (166 aa)) enclose the Alphavirus-like MT domain. Disordered stretches follow at residues 474-499 (DLAG…EKKE), 513-563 (RKHN…DLPG), and 581-600 (QKWE…TEII). A compositionally biased stretch (polar residues) spans 480-489 (GNNQEETSTA). The span at 513–528 (RKHNRETRSRAAKKAK) shows a compositional bias: basic residues. The span at 529 to 547 (RLAEIQDSMNRDRTEEGSH) shows a compositional bias: basic and acidic residues. Over residues 586–595 (ASSTDSSTID) the composition is skewed to polar residues. Positions 695–862 (DVKNKRIGAI…VFAKYCRYYL (168 aa)) constitute a (+)RNA virus helicase ATP-binding domain. 735 to 742 (GAGGSGKS) is a binding site for ATP. A (+)RNA virus helicase C-terminal domain is found at 863 to 997 (NATHRNKKDL…VVREHALKEY (135 aa)). Residues 1236-1343 (RPSLANDYTA…DCVPEVKQSF (108 aa)) enclose the RdRp catalytic domain.

Belongs to the potexvirus/carlavirus RNA replication protein family.

It carries out the reaction RNA(n) + a ribonucleoside 5'-triphosphate = RNA(n+1) + diphosphate. It catalyses the reaction ATP + H2O = ADP + phosphate + H(+). Functionally, RNA replication. The central part of this protein possibly functions as an ATP-binding helicase. This Brassica campestris (Field mustard) protein is RNA replication protein.